The sequence spans 309 residues: Olfactory receptor 4A47 (309 aa).

The Extracellular portion of the chain corresponds to 1–23 (MEPRKNVTDFVLLGFTQNPKEQK). A glycan (N-linked (GlcNAc...) asparagine) is linked at N6. A helical transmembrane segment spans residues 24–47 (VLFVMFLLFYILTMVGNLLIVVTV). Over 48 to 55 (TVSETLGS) the chain is Cytoplasmic. A helical transmembrane segment spans residues 56 to 77 (PMYFFLAGLSFIDIIYSSSISP). Residues 78–98 (RLISGLFFGNNSISFQSCMAQ) are Extracellular-facing. An N-linked (GlcNAc...) asparagine glycan is attached at N87. Cysteines 95 and 187 form a disulfide. A helical transmembrane segment spans residues 99–118 (LFIEHIFGGSEVFLLLVMAY). The Cytoplasmic portion of the chain corresponds to 119 to 137 (DCYVAICKPLHYLVIMRQW). A helical transmembrane segment spans residues 138–156 (VCVVLLVVSWVGGFLHSVF). The Extracellular segment spans residues 157–193 (QLSIIYGLPFCGPNVIDHFFCDMYPLLKLVCTDTHAI). Residues 194–217 (GLLVVANGGLACTIVFLLLLISYG) traverse the membrane as a helical segment. Over 218 to 233 (VILHSLKNLSQKGRQK) the chain is Cytoplasmic. A helical transmembrane segment spans residues 234 to 256 (ALSTCSSHMTVVVFFFVPCIFMY). Residues 257–267 (ARPARTFPIDK) lie on the Extracellular side of the membrane. The chain crosses the membrane as a helical span at residues 268-287 (SVSVFYTVITPMLNPLIYTL). At 288 to 309 (RNSEMTSAMKKLWRRDLISSST) the chain is on the cytoplasmic side.

It belongs to the G-protein coupled receptor 1 family.

The protein resides in the cell membrane. In terms of biological role, odorant receptor. In Homo sapiens (Human), this protein is Olfactory receptor 4A47 (OR4A47).